The chain runs to 175 residues: E1B protein, small T-antigen (175 aa).

A disordered region spans residues 153–175; sequence LAEEDEDEEGTTLTTEAEQESSA.

This sequence belongs to the adenoviridae E1B 19 kDa protein family.

This Mus musculus (Mouse) protein is E1B protein, small T-antigen.